Here is a 397-residue protein sequence, read N- to C-terminus: Tryptophan synthase beta chain 1 (397 aa).

K90 carries the post-translational modification N6-(pyridoxal phosphate)lysine.

It belongs to the TrpB family. As to quaternary structure, tetramer of two alpha and two beta chains. Pyridoxal 5'-phosphate is required as a cofactor.

It carries out the reaction (1S,2R)-1-C-(indol-3-yl)glycerol 3-phosphate + L-serine = D-glyceraldehyde 3-phosphate + L-tryptophan + H2O. The protein operates within amino-acid biosynthesis; L-tryptophan biosynthesis; L-tryptophan from chorismate: step 5/5. Its function is as follows. The beta subunit is responsible for the synthesis of L-tryptophan from indole and L-serine. The chain is Tryptophan synthase beta chain 1 (trpB1) from Aquifex aeolicus (strain VF5).